A 123-amino-acid polypeptide reads, in one-letter code: Large ribosomal subunit protein bL12 (123 aa).

It belongs to the bacterial ribosomal protein bL12 family. In terms of assembly, homodimer. Part of the ribosomal stalk of the 50S ribosomal subunit. Forms a multimeric L10(L12)X complex, where L10 forms an elongated spine to which 2 to 4 L12 dimers bind in a sequential fashion. Binds GTP-bound translation factors.

Forms part of the ribosomal stalk which helps the ribosome interact with GTP-bound translation factors. Is thus essential for accurate translation. This Clostridium botulinum (strain ATCC 19397 / Type A) protein is Large ribosomal subunit protein bL12.